Here is a 94-residue protein sequence, read N- to C-terminus: Co-chaperonin GroES (94 aa).

The protein belongs to the GroES chaperonin family. In terms of assembly, heptamer of 7 subunits arranged in a ring. Interacts with the chaperonin GroEL.

The protein resides in the cytoplasm. In terms of biological role, together with the chaperonin GroEL, plays an essential role in assisting protein folding. The GroEL-GroES system forms a nano-cage that allows encapsulation of the non-native substrate proteins and provides a physical environment optimized to promote and accelerate protein folding. GroES binds to the apical surface of the GroEL ring, thereby capping the opening of the GroEL channel. This chain is Co-chaperonin GroES, found in Caldanaerobacter subterraneus subsp. tengcongensis (strain DSM 15242 / JCM 11007 / NBRC 100824 / MB4) (Thermoanaerobacter tengcongensis).